Consider the following 610-residue polypeptide: Elongation factor 4 (610 aa).

One can recognise a tr-type G domain in the interval 12-194 (EKIRNFSIIA…QIVEKVPAPQ (183 aa)). GTP contacts are provided by residues 24–29 (DHGKST) and 141–144 (NKID).

Belongs to the TRAFAC class translation factor GTPase superfamily. Classic translation factor GTPase family. LepA subfamily.

It is found in the cell membrane. It catalyses the reaction GTP + H2O = GDP + phosphate + H(+). Required for accurate and efficient protein synthesis under certain stress conditions. May act as a fidelity factor of the translation reaction, by catalyzing a one-codon backward translocation of tRNAs on improperly translocated ribosomes. Back-translocation proceeds from a post-translocation (POST) complex to a pre-translocation (PRE) complex, thus giving elongation factor G a second chance to translocate the tRNAs correctly. Binds to ribosomes in a GTP-dependent manner. The polypeptide is Elongation factor 4 (Streptococcus thermophilus (strain ATCC BAA-250 / LMG 18311)).